We begin with the raw amino-acid sequence, 89 residues long: Small ribosomal subunit protein uS15 (89 aa).

It belongs to the universal ribosomal protein uS15 family. Part of the 30S ribosomal subunit. Forms a bridge to the 50S subunit in the 70S ribosome, contacting the 23S rRNA.

One of the primary rRNA binding proteins, it binds directly to 16S rRNA where it helps nucleate assembly of the platform of the 30S subunit by binding and bridging several RNA helices of the 16S rRNA. Its function is as follows. Forms an intersubunit bridge (bridge B4) with the 23S rRNA of the 50S subunit in the ribosome. This is Small ribosomal subunit protein uS15 from Staphylococcus saprophyticus subsp. saprophyticus (strain ATCC 15305 / DSM 20229 / NCIMB 8711 / NCTC 7292 / S-41).